Here is a 22-residue protein sequence, read N- to C-terminus: Short-chain-enoyl-CoA hydratase (22 aa).

This sequence belongs to the enoyl-CoA hydratase/isomerase family.

The enzyme catalyses a short-chain (3S)-3-hydroxyacyl-CoA = a short-chain (2E)-enoyl-CoA + H2O. Its pathway is lipid metabolism; butanoate metabolism. This Clostridium pasteurianum protein is Short-chain-enoyl-CoA hydratase (crt).